Consider the following 190-residue polypeptide: Vascular endothelial growth factor A (190 aa).

The N-terminal stretch at methionine 1–alanine 26 is a signal peptide. Disulfide bonds link cysteine 51/cysteine 93, cysteine 82/cysteine 127, and cysteine 86/cysteine 129. An N-linked (GlcNAc...) asparagine glycan is attached at asparagine 100.

This sequence belongs to the PDGF/VEGF growth factor family. Homodimer; disulfide-linked. Also found as heterodimer with PGF. Interacts with NRP1. Interacts with BSG. Interacts with CD82; this interaction inhibits VEGFA-mediated signaling pathway.

The protein resides in the secreted. Growth factor active in angiogenesis, vasculogenesis and endothelial cell growth. Induces endothelial cell proliferation, promotes cell migration, inhibits apoptosis and induces permeabilization of blood vessels. Binds to the FLT1/VEGFR1 and KDR/VEGFR2 receptors, heparan sulfate and heparin. Binding to NRP1 receptor initiates a signaling pathway needed for motor neuron axon guidance and cell body migration, including for the caudal migration of facial motor neurons from rhombomere 4 to rhombomere 6 during embryonic development. Also binds the DEAR/FBXW7-AS1 receptor. The protein is Vascular endothelial growth factor A (VEGFA) of Sus scrofa (Pig).